Here is a 350-residue protein sequence, read N- to C-terminus: UDP-glucose 4-epimerase GEPI48 (350 aa).

5–36 (TVLVTGGAGYIGSHTVLQLLLGGFKAVVVDNL) is an NAD(+) binding site. S130 contacts substrate. Y154 acts as the Proton acceptor in catalysis.

Belongs to the NAD(P)-dependent epimerase/dehydratase family. The cofactor is NAD(+).

It catalyses the reaction UDP-alpha-D-glucose = UDP-alpha-D-galactose. The protein operates within carbohydrate metabolism; galactose metabolism. The protein is UDP-glucose 4-epimerase GEPI48 of Cyamopsis tetragonoloba (Guar).